The following is a 145-amino-acid chain: Probable 4-amino-4-deoxy-L-arabinose-phosphoundecaprenol flippase subunit ArnF (145 aa).

Residues 1 to 3 lie on the Cytoplasmic side of the membrane; it reads MAH. A helical membrane pass occupies residues 4-24; that stretch reads LTLSIRGLLLALMSVLLISVA. At 25 to 61 the chain is on the periplasmic side; sequence QLSMKWGMGTLNQLWSDLVMLWQGEDYSSLFSQALAP. A helical membrane pass occupies residues 62-82; it reads VMAVGAGLFCYALSMACWVMA. Residues 83–89 lie on the Cytoplasmic side of the membrane; sequence LKRLPLS. The helical transmembrane segment at 90–110 threads the bilayer; the sequence is IAYPLLSLSYVLVYLGAVYLP. The Periplasmic segment spans residues 111–114; it reads WLNE. A helical transmembrane segment spans residues 115–135; the sequence is PLSWVKGTGIFLILLGLIFVL. At 136–145 the chain is on the cytoplasmic side; that stretch reads PKKNQTSDKS.

Belongs to the ArnF family. In terms of assembly, heterodimer of ArnE and ArnF.

The protein resides in the cell inner membrane. It participates in bacterial outer membrane biogenesis; lipopolysaccharide biosynthesis. In terms of biological role, translocates 4-amino-4-deoxy-L-arabinose-phosphoundecaprenol (alpha-L-Ara4N-phosphoundecaprenol) from the cytoplasmic to the periplasmic side of the inner membrane. The sequence is that of Probable 4-amino-4-deoxy-L-arabinose-phosphoundecaprenol flippase subunit ArnF from Shewanella sediminis (strain HAW-EB3).